Consider the following 27-residue polypeptide: AGSKVVGYFTEWGTYDRKYYVKNIEXS.

Residues 3–27 form the GH18 domain; it reads SKVVGYFTEWGTYDRKYYVKNIEXS.

This sequence belongs to the glycosyl hydrolase 18 family. Chitinase class II subfamily. In terms of assembly, homodimer.

The enzyme catalyses Random endo-hydrolysis of N-acetyl-beta-D-glucosaminide (1-&gt;4)-beta-linkages in chitin and chitodextrins.. Its function is as follows. Able to cleave chitin oligomers from N=3 to 6. This chain is Chitinase 47 kDa, found in Streptomyces olivaceoviridis (Streptomyces corchorusii).